A 342-amino-acid polypeptide reads, in one-letter code: MQVTQRWNREQAISLFNKPFFDLLFQAQQVHRKYFRLGQVQISTLLSIKTGNCAEDCKYCPQSSHYETKLDNEPLVQLPQVLAAAKKASDAGSTRFCIGAAWKKIHDRDMPLLEQIVTGVKAIGLETCMTLGILKPQQAQRLAKAGLDFYNHNLDTSPEFYHSIVTTRSYQDRLNTIENVRKAGIKICSGGIIGLGETISDRAGLLVELANLPEPPSSVPINMLVKVRGTPMFDNKDVDPFDLIRMIAVTRIMMPTSYVRLSAGREQMNEQTQAICFMAGANSIFYGRKLLTSSNPTEDSDKRLFRKLGMQIEKHTTIKNSNWKKKKLLLHDNQQHDNTISS.

The Radical SAM core domain maps to 38 to 262; it reads GQVQISTLLS…MMPTSYVRLS (225 aa). Residues cysteine 53, cysteine 57, and cysteine 60 each contribute to the [4Fe-4S] cluster site. Cysteine 97, cysteine 128, cysteine 188, and arginine 260 together coordinate [2Fe-2S] cluster.

Belongs to the radical SAM superfamily. Biotin synthase family. As to quaternary structure, homodimer. [4Fe-4S] cluster serves as cofactor. The cofactor is [2Fe-2S] cluster.

It carries out the reaction (4R,5S)-dethiobiotin + (sulfur carrier)-SH + 2 reduced [2Fe-2S]-[ferredoxin] + 2 S-adenosyl-L-methionine = (sulfur carrier)-H + biotin + 2 5'-deoxyadenosine + 2 L-methionine + 2 oxidized [2Fe-2S]-[ferredoxin]. The protein operates within cofactor biosynthesis; biotin biosynthesis; biotin from 7,8-diaminononanoate: step 2/2. In terms of biological role, catalyzes the conversion of dethiobiotin (DTB) to biotin by the insertion of a sulfur atom into dethiobiotin via a radical-based mechanism. This is Biotin synthase from Baumannia cicadellinicola subsp. Homalodisca coagulata.